The following is a 240-amino-acid chain: Enolase-phosphatase E1 (240 aa).

Asp-9 and Glu-11 together coordinate Mg(2+). Residues 129–130 and Lys-168 each bind substrate; that span reads SS. Asp-195 provides a ligand contact to Mg(2+).

Belongs to the HAD-like hydrolase superfamily. MasA/MtnC family. In terms of assembly, monomer. Mg(2+) serves as cofactor.

The protein resides in the cytoplasm. Its subcellular location is the nucleus. It catalyses the reaction 5-methylsulfanyl-2,3-dioxopentyl phosphate + H2O = 1,2-dihydroxy-5-(methylsulfanyl)pent-1-en-3-one + phosphate. Its pathway is amino-acid biosynthesis; L-methionine biosynthesis via salvage pathway; L-methionine from S-methyl-5-thio-alpha-D-ribose 1-phosphate: step 3/6. It participates in amino-acid biosynthesis; L-methionine biosynthesis via salvage pathway; L-methionine from S-methyl-5-thio-alpha-D-ribose 1-phosphate: step 4/6. Its function is as follows. Bifunctional enzyme that catalyzes the enolization of 2,3-diketo-5-methylthiopentyl-1-phosphate (DK-MTP-1-P) into the intermediate 2-hydroxy-3-keto-5-methylthiopentenyl-1-phosphate (HK-MTPenyl-1-P), which is then dephosphorylated to form the acireductone 1,2-dihydroxy-3-keto-5-methylthiopentene (DHK-MTPene). This Candida tropicalis (strain ATCC MYA-3404 / T1) (Yeast) protein is Enolase-phosphatase E1.